A 277-amino-acid chain; its full sequence is Large ribosomal subunit protein uL2 (277 aa).

Positions M225 to G277 are disordered.

The protein belongs to the universal ribosomal protein uL2 family. In terms of assembly, part of the 50S ribosomal subunit. Forms a bridge to the 30S subunit in the 70S ribosome.

One of the primary rRNA binding proteins. Required for association of the 30S and 50S subunits to form the 70S ribosome, for tRNA binding and peptide bond formation. It has been suggested to have peptidyltransferase activity; this is somewhat controversial. Makes several contacts with the 16S rRNA in the 70S ribosome. This chain is Large ribosomal subunit protein uL2, found in Nitrosospira multiformis (strain ATCC 25196 / NCIMB 11849 / C 71).